A 319-amino-acid polypeptide reads, in one-letter code: tRNA U34 carboxymethyltransferase (319 aa).

Carboxy-S-adenosyl-L-methionine-binding positions include Lys-88, Trp-102, Lys-107, Gly-126, Leu-176–Glu-177, Met-192, Tyr-196, and Arg-311.

This sequence belongs to the class I-like SAM-binding methyltransferase superfamily. CmoB family. In terms of assembly, homotetramer.

It catalyses the reaction carboxy-S-adenosyl-L-methionine + 5-hydroxyuridine(34) in tRNA = 5-carboxymethoxyuridine(34) in tRNA + S-adenosyl-L-homocysteine + H(+). Catalyzes carboxymethyl transfer from carboxy-S-adenosyl-L-methionine (Cx-SAM) to 5-hydroxyuridine (ho5U) to form 5-carboxymethoxyuridine (cmo5U) at position 34 in tRNAs. This chain is tRNA U34 carboxymethyltransferase, found in Pseudomonas syringae pv. tomato (strain ATCC BAA-871 / DC3000).